Here is a 432-residue protein sequence, read N- to C-terminus: D-amino acid dehydrogenase (432 aa).

An FAD-binding site is contributed by 3-17 (VVVLGSGVVGVASAW).

This sequence belongs to the DadA oxidoreductase family. FAD serves as cofactor.

It catalyses the reaction a D-alpha-amino acid + A + H2O = a 2-oxocarboxylate + AH2 + NH4(+). The protein operates within amino-acid degradation; D-alanine degradation; NH(3) and pyruvate from D-alanine: step 1/1. In terms of biological role, oxidative deamination of D-amino acids. This chain is D-amino acid dehydrogenase, found in Cronobacter sakazakii (strain ATCC BAA-894) (Enterobacter sakazakii).